The chain runs to 179 residues: Peptidyl-prolyl cis-trans isomerase A (179 aa).

Residues 15 to 178 form the PPIase cyclophilin-type domain; sequence FFDITIGGVE…KPVVIANCGQ (164 aa).

It belongs to the cyclophilin-type PPIase family.

The protein resides in the cytoplasm. The protein localises to the cytosol. It catalyses the reaction [protein]-peptidylproline (omega=180) = [protein]-peptidylproline (omega=0). With respect to regulation, binds cyclosporin A (CsA). CsA mediates some of its effects via an inhibitory action on PPIase. In terms of biological role, PPIase that catalyzes the cis-trans isomerization of proline imidic peptide bonds in oligopeptides and may therefore assist protein folding. This is Peptidyl-prolyl cis-trans isomerase A (ppiA) from Dictyostelium discoideum (Social amoeba).